The following is a 62-amino-acid chain: Disintegrin atropoimin (62 aa).

Residues 1–62 (EAGEECDCGT…ADCPRNGLYG (62 aa)) form the Disintegrin domain. Disulfide bonds link C6–C21, C8–C16, C15–C38, C29–C35, and C34–C48. Positions 41–42 (GD) match the Cell attachment site motif.

The protein belongs to the venom metalloproteinase (M12B) family. P-II subfamily. P-IIa sub-subfamily. As to quaternary structure, monomer. As to expression, expressed by the venom gland.

The protein resides in the secreted. Inhibits ADP- (IC(50)=63 nM) and collagen-induced (IC(50)=53 nM) aggregation of human platelets. In vitro, inhibits adhesion of endothelial cells to vitronectin, type-I collagen and, to a lower degree, fibronectin and laminin. This is Disintegrin atropoimin from Metlapilcoatlus mexicanus (Central American jumping pitviper).